The chain runs to 160 residues: Early E3 18.5 kDa glycoprotein (160 aa).

An N-terminal signal peptide occupies residues 1–17; it reads MIRYIILGLLTLASAHG. The Lumenal segment spans residues 18 to 124; it reads TTQKVDFKEP…PPQNCVENTG (107 aa). Cystine bridges form between Cys-29/Cys-46 and Cys-40/Cys-101. N-linked (GlcNAc...) asparagine; by host glycans are attached at residues Asn-30 and Asn-79. A helical membrane pass occupies residues 125–145; the sequence is TFCCTAMLITVLALVCTLLYI. Topologically, residues 146–160 are cytoplasmic; that stretch reads KYKSRRSFIEEKKMP. Residues 157 to 160 carry the Di-lysine motif motif; the sequence is KKMP.

The protein belongs to the adenoviridae E19 family. In terms of processing, both disulfide bonds are absolutely critical for the interaction with MHC antigens. Post-translationally, N-glycosylated; high-mannose.

It localises to the host endoplasmic reticulum membrane. Functionally, binds and retains class I heavy chains in the endoplasmic reticulum during the early period of virus infection, thereby impairing their transport to the cell surface. Also delays the expression of class I alleles that it cannot affect by direct retention. Binds transporters associated with antigen processing (TAP) and acts as a tapasin inhibitor, preventing class I/TAP association. In consequence, infected cells are masked for immune recognition by cytotoxic T-lymphocytes. In Homo sapiens (Human), this protein is Early E3 18.5 kDa glycoprotein.